Reading from the N-terminus, the 773-residue chain is Membrane-bound aldehyde dehydrogenase [pyrroloquinoline-quinone] (773 aa).

A signal peptide (tat-type signal) is located at residues 1-44 (MGRLNRFRLGKDGRREQASLSRRGFLVTSLGAGVMFGFARPSSA).

It depends on pyrroloquinoline quinone as a cofactor. Post-translationally, predicted to be exported by the Tat system. The position of the signal peptide cleavage has been experimentally proven.

It is found in the cell inner membrane. It carries out the reaction an aldehyde + a quinone + H2O = a quinol + a carboxylate + H(+). The sequence is that of Membrane-bound aldehyde dehydrogenase [pyrroloquinoline-quinone] from Gluconacetobacter polyoxogenes (Acetobacter polyoxogenes).